We begin with the raw amino-acid sequence, 135 residues long: Nucleoside diphosphate kinase (135 aa).

Lys-10, Phe-58, Arg-86, Thr-92, Arg-103, and Asn-113 together coordinate ATP. The active-site Pros-phosphohistidine intermediate is the His-116.

The protein belongs to the NDK family. Homotetramer. Mg(2+) is required as a cofactor.

It is found in the cytoplasm. It catalyses the reaction a 2'-deoxyribonucleoside 5'-diphosphate + ATP = a 2'-deoxyribonucleoside 5'-triphosphate + ADP. The enzyme catalyses a ribonucleoside 5'-diphosphate + ATP = a ribonucleoside 5'-triphosphate + ADP. Major role in the synthesis of nucleoside triphosphates other than ATP. The ATP gamma phosphate is transferred to the NDP beta phosphate via a ping-pong mechanism, using a phosphorylated active-site intermediate. This chain is Nucleoside diphosphate kinase, found in Nocardioides sp. (strain ATCC BAA-499 / JS614).